Here is a 223-residue protein sequence, read N- to C-terminus: Ribose-5-phosphate isomerase A (223 aa).

Substrate-binding positions include 26 to 29 (TGST), 82 to 85 (DGAD), and 95 to 98 (KGGG). Glutamate 104 serves as the catalytic Proton acceptor. Lysine 122 contacts substrate.

This sequence belongs to the ribose 5-phosphate isomerase family. In terms of assembly, homodimer.

It carries out the reaction aldehydo-D-ribose 5-phosphate = D-ribulose 5-phosphate. It participates in carbohydrate degradation; pentose phosphate pathway; D-ribose 5-phosphate from D-ribulose 5-phosphate (non-oxidative stage): step 1/1. Functionally, catalyzes the reversible conversion of ribose-5-phosphate to ribulose 5-phosphate. This Streptococcus agalactiae serotype Ia (strain ATCC 27591 / A909 / CDC SS700) protein is Ribose-5-phosphate isomerase A.